Reading from the N-terminus, the 406-residue chain is MVSVTHCDSLWFGADIITMRGGNYQLIPQGAIAVTGDKIVWIGPHAELPPIHAARQVVYEGGLITPGLIDCHTHLVFGGDRSNEFEQRLNGVSYAEIAANGGGIISTVRATRQASEQQLLEQALFRLKPLLAEGVTTIEIKSGYGLNLESEIKMLRVARRLGELLPIDVKTTCLAAHALPPEFIGQPDDYIDVVCNSIIPQVAVENLADAVDAFCEHLAFSPAQVERVFLAAQKAGLPVKLHAEQLSALRGATLAAKFHAISADHLEYATESDVQAMANAGTVAVLLPGAYYLLRETQCPPIDLFRQYKVPMALASDANPGTSPVLSLRLMLNMACTLFRMTPEEALAGVTCHAAQALGVQQTQGTLETGKLANWVHWPLSHPAELAYWLGGQLPATVVFRGEVRP.

His72 and His74 together coordinate Fe(3+). 2 residues coordinate Zn(2+): His72 and His74. Arg81, Tyr144, and His177 together coordinate 4-imidazolone-5-propanoate. Residue Tyr144 participates in N-formimidoyl-L-glutamate binding. His242 contributes to the Fe(3+) binding site. His242 is a Zn(2+) binding site. Gln245 provides a ligand contact to 4-imidazolone-5-propanoate. Asp317 serves as a coordination point for Fe(3+). A Zn(2+)-binding site is contributed by Asp317. N-formimidoyl-L-glutamate is bound by residues Asn319 and Gly321. Thr322 contributes to the 4-imidazolone-5-propanoate binding site.

Belongs to the metallo-dependent hydrolases superfamily. HutI family. It depends on Zn(2+) as a cofactor. Fe(3+) is required as a cofactor.

The protein localises to the cytoplasm. The enzyme catalyses 4-imidazolone-5-propanoate + H2O = N-formimidoyl-L-glutamate. It functions in the pathway amino-acid degradation; L-histidine degradation into L-glutamate; N-formimidoyl-L-glutamate from L-histidine: step 3/3. Its function is as follows. Catalyzes the hydrolytic cleavage of the carbon-nitrogen bond in imidazolone-5-propanoate to yield N-formimidoyl-L-glutamate. It is the third step in the universal histidine degradation pathway. This is Imidazolonepropionase from Yersinia pseudotuberculosis serotype O:3 (strain YPIII).